The following is a 643-amino-acid chain: Alpha-dioxygenase PIOX (643 aa).

The active-site Proton acceptor is H168. A Ca(2+)-binding site is contributed by D169. Residue H173 participates in heme b binding. T221, W223, D225, and S227 together coordinate Ca(2+). Heme b is bound by residues H393, R490, and R494.

Belongs to the peroxidase family. Heme b serves as cofactor. Ca(2+) is required as a cofactor.

The catalysed reaction is hexadecanoate + O2 = (2R)-2-hydroperoxyhexadecanoate. It catalyses the reaction dodecanoate + O2 = (2R)-2-hydroperoxydodecanoate. Alpha-dioxygenase that catalyzes the primary oxygenation step of a variety of 14-20 carbon fatty acids, containing up to three unsaturated bonds, into their corresponding 2R-hydroperoxides. Involved in the production of oxylipins that function in cell signaling, wound healing, and protection from infection. The alpha-oxidation pathway of fatty acids may play a role during plant developmental processes. The chain is Alpha-dioxygenase PIOX from Pisum sativum (Garden pea).